The primary structure comprises 79 residues: Short neurotoxin 2 (79 aa).

The first 19 residues, 1–19, serve as a signal peptide directing secretion; that stretch reads PLLLTLVVVTIVCLDLGYT. 4 cysteine pairs are disulfide-bonded: Cys22/Cys41, Cys36/Cys58, Cys60/Cys71, and Cys72/Cys77.

The protein belongs to the three-finger toxin family. Short-chain subfamily. Type I alpha-neurotoxin sub-subfamily. As to expression, expressed by the venom gland.

It is found in the secreted. Binds to muscle nicotinic acetylcholine receptor (nAChR) and inhibit acetylcholine from binding to the receptor, thereby impairing neuromuscular transmission. This chain is Short neurotoxin 2, found in Hydrophis cyanocinctus (Asian annulated sea snake).